We begin with the raw amino-acid sequence, 172 residues long: Large ribosomal subunit protein uL10 (172 aa).

Belongs to the universal ribosomal protein uL10 family. In terms of assembly, part of the ribosomal stalk of the 50S ribosomal subunit. The N-terminus interacts with L11 and the large rRNA to form the base of the stalk. The C-terminus forms an elongated spine to which L12 dimers bind in a sequential fashion forming a multimeric L10(L12)X complex.

Its function is as follows. Forms part of the ribosomal stalk, playing a central role in the interaction of the ribosome with GTP-bound translation factors. The chain is Large ribosomal subunit protein uL10 from Lawsonia intracellularis (strain PHE/MN1-00).